A 168-amino-acid chain; its full sequence is Probable acetolactate synthase small subunit (168 aa).

The ACT domain occupies Ile10 to Pro84.

Belongs to the acetolactate synthase small subunit family. Dimer of large and small chains.

It carries out the reaction 2 pyruvate + H(+) = (2S)-2-acetolactate + CO2. It functions in the pathway amino-acid biosynthesis; L-isoleucine biosynthesis; L-isoleucine from 2-oxobutanoate: step 1/4. It participates in amino-acid biosynthesis; L-valine biosynthesis; L-valine from pyruvate: step 1/4. The protein is Probable acetolactate synthase small subunit (ilvH) of Methanothermobacter thermautotrophicus (strain ATCC 29096 / DSM 1053 / JCM 10044 / NBRC 100330 / Delta H) (Methanobacterium thermoautotrophicum).